Consider the following 298-residue polypeptide: 4-nitrophenylphosphatase (298 aa).

In terms of assembly, homodimer. Post-translationally, the N-terminus is blocked.

It carries out the reaction 4-nitrophenyl phosphate + H2O = 4-nitrophenol + phosphate + H(+). With respect to regulation, activity enhanced by Mg(2+) ion but inhibited by Zn(2+) ion. The polypeptide is 4-nitrophenylphosphatase (pho2) (Schizosaccharomyces pombe (strain 972 / ATCC 24843) (Fission yeast)).